The sequence spans 276 residues: S-adenosylmethionine decarboxylase proenzyme (276 aa).

S126 functions as the Schiff-base intermediate with substrate; via pyruvic acid in the catalytic mechanism. A Pyruvic acid (Ser); by autocatalysis modification is found at S126. H131 functions as the Proton acceptor; for processing activity in the catalytic mechanism. C154 acts as the Proton donor; for catalytic activity in catalysis.

It belongs to the prokaryotic AdoMetDC family. Type 2 subfamily. Heterooctamer of four alpha and four beta chains arranged as a tetramer of alpha/beta heterodimers. Requires pyruvate as cofactor. Is synthesized initially as an inactive proenzyme. Formation of the active enzyme involves a self-maturation process in which the active site pyruvoyl group is generated from an internal serine residue via an autocatalytic post-translational modification. Two non-identical subunits are generated from the proenzyme in this reaction, and the pyruvate is formed at the N-terminus of the alpha chain, which is derived from the carboxyl end of the proenzyme. The post-translation cleavage follows an unusual pathway, termed non-hydrolytic serinolysis, in which the side chain hydroxyl group of the serine supplies its oxygen atom to form the C-terminus of the beta chain, while the remainder of the serine residue undergoes an oxidative deamination to produce ammonia and the pyruvoyl group blocking the N-terminus of the alpha chain.

The catalysed reaction is S-adenosyl-L-methionine + H(+) = S-adenosyl 3-(methylsulfanyl)propylamine + CO2. The protein operates within amine and polyamine biosynthesis; S-adenosylmethioninamine biosynthesis; S-adenosylmethioninamine from S-adenosyl-L-methionine: step 1/1. Functionally, catalyzes the decarboxylation of S-adenosylmethionine to S-adenosylmethioninamine (dcAdoMet), the propylamine donor required for the synthesis of the polyamines spermine and spermidine from the diamine putrescine. In Alcanivorax borkumensis (strain ATCC 700651 / DSM 11573 / NCIMB 13689 / SK2), this protein is S-adenosylmethionine decarboxylase proenzyme.